Here is a 141-residue protein sequence, read N- to C-terminus: Small ribosomal subunit protein bS6 (141 aa).

The disordered stretch occupies residues 96–141 (VTGPSAMMKTVEREEFRKASQAGNQTTAPAASPADHAAAPASADRS). The segment covering 123 to 141 (APAASPADHAAAPASADRS) has biased composition (low complexity).

The protein belongs to the bacterial ribosomal protein bS6 family.

Binds together with bS18 to 16S ribosomal RNA. The sequence is that of Small ribosomal subunit protein bS6 from Verminephrobacter eiseniae (strain EF01-2).